The following is a 143-amino-acid chain: Putative pre-16S rRNA nuclease (143 aa).

The protein belongs to the YqgF nuclease family.

It is found in the cytoplasm. Could be a nuclease involved in processing of the 5'-end of pre-16S rRNA. This Agathobacter rectalis (strain ATCC 33656 / DSM 3377 / JCM 17463 / KCTC 5835 / VPI 0990) (Eubacterium rectale) protein is Putative pre-16S rRNA nuclease.